Here is a 359-residue protein sequence, read N- to C-terminus: Golgi-resident adenosine 3',5'-bisphosphate 3'-phosphatase (359 aa).

Methionine 1 is modified (N-acetylmethionine). At 1-12 (MAPMGIRLSPLG) the chain is on the cytoplasmic side. The helical transmembrane segment at 13-33 (VAVFCLLGLGVLYHLYSGFLA) threads the bilayer. The Lumenal portion of the chain corresponds to 34 to 359 (GRFSLFGLGG…LPDLEKTGHK (326 aa)). The segment at 86–106 (ESNVLHEKSKGKTREGAEDKM) is disordered. Residue aspartate 110 is the Proton acceptor of the active site. Glutamate 133, aspartate 174, leucine 176, and aspartate 177 together coordinate Mg(2+). The active-site Proton acceptor is the threonine 179. Residues serine 242 and histidine 245 each contribute to the AMP site. Asparagine 259 is a glycosylation site (N-linked (GlcNAc...) asparagine). Positions 268 and 272 each coordinate AMP. Aspartate 300 provides a ligand contact to Mg(2+).

Belongs to the inositol monophosphatase superfamily. Requires Mg(2+) as cofactor. Contains N-linked glycan resistant to endoglycosydase H.

The protein localises to the golgi apparatus. It localises to the trans-Golgi network membrane. The catalysed reaction is adenosine 3',5'-bisphosphate + H2O = AMP + phosphate. It participates in sulfur metabolism. Strongly inhibited by lithium. In terms of biological role, exhibits 3'-nucleotidase activity toward adenosine 3',5'-bisphosphate (PAP), namely hydrolyzes adenosine 3',5'-bisphosphate into adenosine 5'-monophosphate (AMP) and a phosphate. May play a role in the formation of skeletal elements derived through endochondral ossification, possibly by clearing adenosine 3',5'-bisphosphate produced by Golgi sulfotransferases during glycosaminoglycan sulfation. Has no activity toward 3'-phosphoadenosine 5'-phosphosulfate (PAPS) or inositol phosphate (IP) substrates including I(1)P, I(1,4)P2, I(1,3,4)P3, I(1,4,5)P3 and I(1,3,4,5)P4. In Homo sapiens (Human), this protein is Golgi-resident adenosine 3',5'-bisphosphate 3'-phosphatase.